The sequence spans 840 residues: Phosphatidylglycerol lysyltransferase (840 aa).

Residues methionine 1–lysine 8 are Cytoplasmic-facing. The chain crosses the membrane as a helical span at residues isoleucine 9–leucine 29. Residues tyrosine 30–serine 52 are Extracellular-facing. A helical membrane pass occupies residues leucine 53 to isoleucine 73. The Cytoplasmic portion of the chain corresponds to leucine 74–arginine 89. The chain crosses the membrane as a helical span at residues valine 90–glycine 110. Topologically, residues valine 111 to histidine 128 are extracellular. A helical membrane pass occupies residues phenylalanine 129–valine 149. The Cytoplasmic segment spans residues phenylalanine 150–lysine 161. Residues isoleucine 162–tyrosine 182 form a helical membrane-spanning segment. Residues serine 183–threonine 200 lie on the Extracellular side of the membrane. A helical membrane pass occupies residues leucine 201 to valine 221. The Cytoplasmic portion of the chain corresponds to aspartate 222 to serine 229. A helical transmembrane segment spans residues phenylalanine 230–phenylalanine 250. Residues glycine 251 to valine 271 are Extracellular-facing. Residues leucine 272–isoleucine 292 traverse the membrane as a helical segment. Topologically, residues leucine 293–serine 337 are cytoplasmic. The helical transmembrane segment at leucine 338–tyrosine 358 threads the bilayer. The Extracellular segment spans residues aspartate 359–tyrosine 369. A helical membrane pass occupies residues tyrosine 370–isoleucine 390. Residues tyrosine 391–serine 394 are Cytoplasmic-facing. A run of 2 helical transmembrane segments spans residues arginine 395–threonine 415 and tyrosine 416–phenylalanine 436. Residues arginine 437 to asparagine 450 lie on the Cytoplasmic side of the membrane. The chain crosses the membrane as a helical span at residues isoleucine 451 to glycine 471. Residues threonine 472–arginine 489 lie on the Extracellular side of the membrane. Residues tyrosine 490–phenylalanine 510 form a helical membrane-spanning segment. Over aspartate 511 to lysine 840 the chain is Cytoplasmic.

It belongs to the LPG synthase family.

The protein resides in the cell membrane. It catalyses the reaction L-lysyl-tRNA(Lys) + a 1,2-diacyl-sn-glycero-3-phospho-(1'-sn-glycerol) = a 1,2-diacyl-sn-glycero-3-phospho-1'-(3'-O-L-lysyl)-sn-glycerol + tRNA(Lys). Its function is as follows. Catalyzes the transfer of a lysyl group from L-lysyl-tRNA(Lys) to membrane-bound phosphatidylglycerol (PG), which produces lysylphosphatidylglycerol (LPG), a major component of the bacterial membrane with a positive net charge. LPG synthesis contributes to bacterial virulence as it is involved in the resistance mechanism against cationic antimicrobial peptides (CAMP) produces by the host's immune system (defensins, cathelicidins) and by the competing microorganisms (bacteriocins). In fact, the modification of anionic phosphatidylglycerol with positively charged L-lysine results in repulsion of the peptides. The protein is Phosphatidylglycerol lysyltransferase (mprF) of Staphylococcus aureus (strain Mu50 / ATCC 700699).